The primary structure comprises 237 residues: UDP-2,3-diacylglucosamine hydrolase (237 aa).

The Mn(2+) site is built by Asp-8, His-10, Asp-41, Asn-78, and His-113. 78–79 (NR) lines the substrate pocket. Residues Asp-121, Ser-159, Gln-164, and His-195 each coordinate substrate. Residues His-195 and His-197 each coordinate Mn(2+).

It belongs to the LpxH family. Requires Mn(2+) as cofactor.

The protein resides in the cell inner membrane. The enzyme catalyses UDP-2-N,3-O-bis[(3R)-3-hydroxytetradecanoyl]-alpha-D-glucosamine + H2O = 2-N,3-O-bis[(3R)-3-hydroxytetradecanoyl]-alpha-D-glucosaminyl 1-phosphate + UMP + 2 H(+). It participates in glycolipid biosynthesis; lipid IV(A) biosynthesis; lipid IV(A) from (3R)-3-hydroxytetradecanoyl-[acyl-carrier-protein] and UDP-N-acetyl-alpha-D-glucosamine: step 4/6. Functionally, hydrolyzes the pyrophosphate bond of UDP-2,3-diacylglucosamine to yield 2,3-diacylglucosamine 1-phosphate (lipid X) and UMP by catalyzing the attack of water at the alpha-P atom. Involved in the biosynthesis of lipid A, a phosphorylated glycolipid that anchors the lipopolysaccharide to the outer membrane of the cell. This is UDP-2,3-diacylglucosamine hydrolase from Chromobacterium violaceum (strain ATCC 12472 / DSM 30191 / JCM 1249 / CCUG 213 / NBRC 12614 / NCIMB 9131 / NCTC 9757 / MK).